The sequence spans 311 residues: Methionyl-tRNA formyltransferase (311 aa).

Residue 112–115 (SLLP) participates in (6S)-5,6,7,8-tetrahydrofolate binding.

This sequence belongs to the Fmt family.

The enzyme catalyses L-methionyl-tRNA(fMet) + (6R)-10-formyltetrahydrofolate = N-formyl-L-methionyl-tRNA(fMet) + (6S)-5,6,7,8-tetrahydrofolate + H(+). Attaches a formyl group to the free amino group of methionyl-tRNA(fMet). The formyl group appears to play a dual role in the initiator identity of N-formylmethionyl-tRNA by promoting its recognition by IF2 and preventing the misappropriation of this tRNA by the elongation apparatus. The sequence is that of Methionyl-tRNA formyltransferase from Bartonella henselae (strain ATCC 49882 / DSM 28221 / CCUG 30454 / Houston 1) (Rochalimaea henselae).